The sequence spans 308 residues: Cell division protein FtsQ (308 aa).

Residues 1–28 form a disordered region; the sequence is MQSLSFPPNRRTPRLAPPRRETGRRDPA. Residues 1–46 lie on the Cytoplasmic side of the membrane; sequence MQSLSFPPNRRTPRLAPPRRETGRRDPAPSRWAYRAQRLWLTPMFR. Residues 18–28 show a composition bias toward basic and acidic residues; it reads PRRETGRRDPA. A helical membrane pass occupies residues 47–67; sequence TALRVGLPIVGVLLVVALIFA. At 68–308 the chain is on the periplasmic side; it reads SADRRAAMAG…RGIDTSGSDL (241 aa). In terms of domain architecture, POTRA spans 92–160; the sequence is FMVTLLSVDG…GLLEVRVTER (69 aa).

Belongs to the FtsQ/DivIB family. FtsQ subfamily.

Its subcellular location is the cell inner membrane. Its function is as follows. Essential cell division protein. This is Cell division protein FtsQ from Cereibacter sphaeroides (strain ATCC 17023 / DSM 158 / JCM 6121 / CCUG 31486 / LMG 2827 / NBRC 12203 / NCIMB 8253 / ATH 2.4.1.) (Rhodobacter sphaeroides).